The primary structure comprises 601 residues: MSCPAARKGRQQPGFACEECRRRKARCDRVRPKCGFCTENGMQCVIVEKRQQRGPIKGQLNSMQSQLELPAGIPPVLDDFDIQASGLSEHDMSLVAATSVGTSTEASLILPAALDKLELPASSEAAAAGLPGWPEWLDWQDMNNSSLILPELTASTLTDPLSLDSLNGSPPTMVDSSSKIQMTDLIRAELDQLYFDRVHAFCPIIHRRRYFASLAQDNHTTAQLCLQSAMRALAAAMSANSSHLSEQFYSEARSLLDTHSQTPATPRDKIPLEHIQAWLLLSHYELLRIGVHQAMLTAGRAFRLVQMARLCEIDAPGGDLQLSPVASSSSSISTNTDSSESFVDAEEGRRTFWKKWHVFLHADTMQNSLTRLLPIQVSTRLPAPEANFQNNQPTRTSFLADAMAQTGPSTLSPFAECIIMATLHGRCMTHRRLYATEFEAGTRDFCIRQGWLATAVERRVQMLVPSPAVDSDPMLLFTHMLAYRATVHLSITVQQASWRTVDQQVLAAAYQQRAAQAASEIVRLAKAVPYLSPFKTHPFLPDTLACAATFLSTQTATDGGGDDIQHLLRVLGELQDTHSLARDYLQTLKLQVQGNRQDGWY.

A DNA-binding region (zn(2)-C6 fungal-type) is located at residues 17–44; it reads CEECRRRKARCDRVRPKCGFCTENGMQC.

The protein localises to the nucleus. Its function is as follows. Specific transcriptional regulator for the azasperpyranone A biosynthesis cluster B. The polypeptide is Transcription factor ATEG_07666 (Aspergillus terreus (strain NIH 2624 / FGSC A1156)).